The chain runs to 212 residues: Phosphatidylserine decarboxylase proenzyme (212 aa).

Catalysis depends on S182, which acts as the Schiff-base intermediate with substrate; via pyruvic acid. Residue S182 is modified to Pyruvic acid (Ser); by autocatalysis.

Belongs to the phosphatidylserine decarboxylase family. PSD-A subfamily. Heterodimer of a large membrane-associated beta subunit and a small pyruvoyl-containing alpha subunit. The cofactor is pyruvate. Post-translationally, is synthesized initially as an inactive proenzyme. Formation of the active enzyme involves a self-maturation process in which the active site pyruvoyl group is generated from an internal serine residue via an autocatalytic post-translational modification. Two non-identical subunits are generated from the proenzyme in this reaction, and the pyruvate is formed at the N-terminus of the alpha chain, which is derived from the carboxyl end of the proenzyme. The post-translation cleavage follows an unusual pathway, termed non-hydrolytic serinolysis, in which the side chain hydroxyl group of the serine supplies its oxygen atom to form the C-terminus of the beta chain, while the remainder of the serine residue undergoes an oxidative deamination to produce ammonia and the pyruvoyl prosthetic group on the alpha chain.

The protein localises to the cell membrane. The enzyme catalyses a 1,2-diacyl-sn-glycero-3-phospho-L-serine + H(+) = a 1,2-diacyl-sn-glycero-3-phosphoethanolamine + CO2. It functions in the pathway phospholipid metabolism; phosphatidylethanolamine biosynthesis; phosphatidylethanolamine from CDP-diacylglycerol: step 2/2. In terms of biological role, catalyzes the formation of phosphatidylethanolamine (PtdEtn) from phosphatidylserine (PtdSer). The protein is Phosphatidylserine decarboxylase proenzyme of Chlorobium phaeobacteroides (strain DSM 266 / SMG 266 / 2430).